A 177-amino-acid polypeptide reads, in one-letter code: Ribulose bisphosphate carboxylase small subunit, chloroplastic 6 (177 aa).

The transit peptide at 1-56 (MASSMMASTAAVARVGPAQTNMVAPFNGLRSSVAFPATRKANNDLSTLPSNGGRVS) directs the protein to the chloroplast.

The protein belongs to the RuBisCO small chain family. As to quaternary structure, heterohexadecamer of 8 large and 8 small subunits.

It localises to the plastid. Its subcellular location is the chloroplast. Its function is as follows. RuBisCO catalyzes two reactions: the carboxylation of D-ribulose 1,5-bisphosphate, the primary event in carbon dioxide fixation, as well as the oxidative fragmentation of the pentose substrate. Both reactions occur simultaneously and in competition at the same active site. Although the small subunit is not catalytic it is essential for maximal activity. This chain is Ribulose bisphosphate carboxylase small subunit, chloroplastic 6, found in Lemna gibba (Swollen duckweed).